A 411-amino-acid chain; its full sequence is Serine hydroxymethyltransferase (411 aa).

120-122 (GHL) serves as a coordination point for (6S)-5,6,7,8-tetrahydrofolate. K225 is subject to N6-(pyridoxal phosphate)lysine. (6S)-5,6,7,8-tetrahydrofolate is bound at residue 350–352 (SPF).

It belongs to the SHMT family. As to quaternary structure, homodimer. It depends on pyridoxal 5'-phosphate as a cofactor.

It is found in the cytoplasm. It carries out the reaction (6R)-5,10-methylene-5,6,7,8-tetrahydrofolate + glycine + H2O = (6S)-5,6,7,8-tetrahydrofolate + L-serine. It functions in the pathway one-carbon metabolism; tetrahydrofolate interconversion. The protein operates within amino-acid biosynthesis; glycine biosynthesis; glycine from L-serine: step 1/1. In terms of biological role, catalyzes the reversible interconversion of serine and glycine with tetrahydrofolate (THF) serving as the one-carbon carrier. This reaction serves as the major source of one-carbon groups required for the biosynthesis of purines, thymidylate, methionine, and other important biomolecules. Also exhibits THF-independent aldolase activity toward beta-hydroxyamino acids, producing glycine and aldehydes, via a retro-aldol mechanism. The polypeptide is Serine hydroxymethyltransferase (Lactobacillus gasseri (strain ATCC 33323 / DSM 20243 / BCRC 14619 / CIP 102991 / JCM 1131 / KCTC 3163 / NCIMB 11718 / NCTC 13722 / AM63)).